Consider the following 109-residue polypeptide: ATP-dependent Clp protease adapter protein ClpS (109 aa).

A disordered region spans residues 1-23 (MTERKHDDTGVEEGTGLATKTRP).

It belongs to the ClpS family. As to quaternary structure, binds to the N-terminal domain of the chaperone ClpA.

In terms of biological role, involved in the modulation of the specificity of the ClpAP-mediated ATP-dependent protein degradation. The polypeptide is ATP-dependent Clp protease adapter protein ClpS (Maricaulis maris (strain MCS10) (Caulobacter maris)).